The sequence spans 262 residues: Cutinase 2 (262 aa).

Tyr61 contacts poly(ethylene terephthalate). Ser131 serves as the catalytic Nucleophile. Poly(ethylene terephthalate)-binding residues include Met132 and Trp156. Active-site charge relay system residues include Asp177 and His209. Cys242 and Cys260 are joined by a disulfide.

Belongs to the AB hydrolase superfamily.

The protein resides in the secreted. It is found in the periplasm. The enzyme catalyses a butanoate ester + H2O = an aliphatic alcohol + butanoate + H(+). The catalysed reaction is an acetyl ester + H2O = an aliphatic alcohol + acetate + H(+). It catalyses the reaction (ethylene terephthalate)(n) + H2O = (ethylene terephthalate)(n-1) + 4-[(2-hydroxyethoxy)carbonyl]benzoate + H(+). It carries out the reaction cutin + H2O = cutin monomers.. Catalyzes the hydrolysis of cutin, a polyester that forms the structure of plant cuticle. Shows esterase activity towards p-nitrophenol-linked aliphatic esters (pNP-aliphatic esters). Capable of degrading the plastic poly(ethylene terephthalate) (PET), the most abundant polyester plastic in the world. Capable of degrading the bioplastic poly(lactic acid) (PLLA). The protein is Cutinase 2 of Thermobifida cellulosilytica.